The sequence spans 500 residues: Abscisic acid 8'-hydroxylase 3 (500 aa).

The helical transmembrane segment at 3–23 threads the bilayer; that stretch reads ASFVIVIVISFFISLAFMCYV. Residue Cys426 coordinates heme.

This sequence belongs to the cytochrome P450 family. Requires heme as cofactor.

The protein localises to the membrane. It catalyses the reaction 2-cis-(+)-abscisate + reduced [NADPH--hemoprotein reductase] + O2 = (+)-8'-hydroxyabscisate + oxidized [NADPH--hemoprotein reductase] + H2O + H(+). It participates in plant hormone degradation; abscisic acid degradation. Its function is as follows. Involved in the oxidative degradation of abscisic acid. The polypeptide is Abscisic acid 8'-hydroxylase 3 (CYP707A7) (Oryza sativa subsp. japonica (Rice)).